A 288-amino-acid chain; its full sequence is Polyketide biosynthesis malonyl CoA-acyl carrier protein transacylase PksC (288 aa).

Catalysis depends on residues Ser87 and His193.

This sequence belongs to the FabD family.

It localises to the cytoplasm. It catalyses the reaction holo-[ACP] + malonyl-CoA = malonyl-[ACP] + CoA. Its pathway is antibiotic biosynthesis; bacillaene biosynthesis. Involved in some intermediate steps for the synthesis of the antibiotic polyketide bacillaene which is involved in secondary metabolism. It catalyzes the transfer of the malonyl-CoA group to the acyl-carrier-protein AcpK (Mal-AcpK). This chain is Polyketide biosynthesis malonyl CoA-acyl carrier protein transacylase PksC (pksC), found in Bacillus subtilis (strain 168).